The following is a 256-amino-acid chain: Acetyl-coenzyme A carboxylase carboxyl transferase subunit alpha (256 aa).

In terms of domain architecture, CoA carboxyltransferase C-terminal spans 1–236 (MTDVARILKE…RSHLIDEITQ (236 aa)).

This sequence belongs to the AccA family. As to quaternary structure, acetyl-CoA carboxylase is a heterohexamer composed of biotin carboxyl carrier protein (AccB), biotin carboxylase (AccC) and two subunits each of ACCase subunit alpha (AccA) and ACCase subunit beta (AccD).

Its subcellular location is the cytoplasm. The catalysed reaction is N(6)-carboxybiotinyl-L-lysyl-[protein] + acetyl-CoA = N(6)-biotinyl-L-lysyl-[protein] + malonyl-CoA. It participates in lipid metabolism; malonyl-CoA biosynthesis; malonyl-CoA from acetyl-CoA: step 1/1. Component of the acetyl coenzyme A carboxylase (ACC) complex. First, biotin carboxylase catalyzes the carboxylation of biotin on its carrier protein (BCCP) and then the CO(2) group is transferred by the carboxyltransferase to acetyl-CoA to form malonyl-CoA. This is Acetyl-coenzyme A carboxylase carboxyl transferase subunit alpha from Streptococcus equi subsp. zooepidemicus (strain MGCS10565).